Reading from the N-terminus, the 130-residue chain is Ribonuclease P protein component 2 (130 aa).

Belongs to the eukaryotic/archaeal RNase P protein component 2 family. In terms of assembly, consists of a catalytic RNA component and at least 4-5 protein subunits.

The protein localises to the cytoplasm. It catalyses the reaction Endonucleolytic cleavage of RNA, removing 5'-extranucleotides from tRNA precursor.. In terms of biological role, part of ribonuclease P, a protein complex that generates mature tRNA molecules by cleaving their 5'-ends. The chain is Ribonuclease P protein component 2 from Methanococcus vannielii (strain ATCC 35089 / DSM 1224 / JCM 13029 / OCM 148 / SB).